The sequence spans 210 residues: MTNYKIDFSKGLVPAILQDNQTKQVLMLGYMNQEAFDKTIEDGVVCFYSRSKQRLWTKGETSGHTQRVKDIHVDCDNDTILIDVIPNGPTCHTGSQSCFNTEVPFSVQTLAQTVQDSAQSNNEKSYTKYLLTEGIEKITKKYGEEAFEVVIEAIKGDKKAFVSEVADELYHLFVLMHALGVDFSEIEAELARRHHKRNNFKGERQNIEQW.

Residues 1–106 (MTNYKIDFSK…SCFNTEVPFS (106 aa)) form a phosphoribosyl-AMP cyclohydrolase region. Residues 107–210 (VQTLAQTVQD…KGERQNIEQW (104 aa)) are phosphoribosyl-ATP pyrophosphohydrolase.

In the N-terminal section; belongs to the PRA-CH family. It in the C-terminal section; belongs to the PRA-PH family.

It is found in the cytoplasm. It catalyses the reaction 1-(5-phospho-beta-D-ribosyl)-ATP + H2O = 1-(5-phospho-beta-D-ribosyl)-5'-AMP + diphosphate + H(+). The catalysed reaction is 1-(5-phospho-beta-D-ribosyl)-5'-AMP + H2O = 1-(5-phospho-beta-D-ribosyl)-5-[(5-phospho-beta-D-ribosylamino)methylideneamino]imidazole-4-carboxamide. The protein operates within amino-acid biosynthesis; L-histidine biosynthesis; L-histidine from 5-phospho-alpha-D-ribose 1-diphosphate: step 2/9. Its pathway is amino-acid biosynthesis; L-histidine biosynthesis; L-histidine from 5-phospho-alpha-D-ribose 1-diphosphate: step 3/9. This Staphylococcus aureus (strain COL) protein is Histidine biosynthesis bifunctional protein HisIE (hisI).